The primary structure comprises 157 residues: Glutamyl-tRNA(Gln) amidotransferase subunit C, mitochondrial (157 aa).

The protein belongs to the GatC family. As to quaternary structure, subunit of the heterotrimeric GatCAB amidotransferase (AdT) complex, composed of A, B and C subunits.

The protein localises to the mitochondrion. The catalysed reaction is L-glutamyl-tRNA(Gln) + L-glutamine + ATP + H2O = L-glutaminyl-tRNA(Gln) + L-glutamate + ADP + phosphate + H(+). Its function is as follows. Allows the formation of correctly charged Gln-tRNA(Gln) through the transamidation of misacylated Glu-tRNA(Gln) in the mitochondria. The reaction takes place in the presence of glutamine and ATP through an activated gamma-phospho-Glu-tRNA(Gln). The sequence is that of Glutamyl-tRNA(Gln) amidotransferase subunit C, mitochondrial from Drosophila virilis (Fruit fly).